We begin with the raw amino-acid sequence, 520 residues long: MKTKELTQSKIEEVSLEILLRHAVKAKHGLEKESMRVNPDGTLSGTTHPIHLGSSLTNHYIKTDFAEPQLEYATHPRPKVEANIRELQDLHIFTIRKLENELIWPFSMPPVLPEEENEIPLGQYGTSHSGRWKTIYRHGLGLRYGRRMQTISGVHYNFSFSKVFLRQFLGKEISNFTKEEISSLYLHVIRNFLRRVHFLTYLTGSSPVFDFTFLPNPGSLKFEKHKNFTLYSTYATSLRMSEIGYTSKVQDTLGIHYNSLEEYVDRMCYAVHTPYPKYVSFSENKDAQLNPNYLQIENEFYSPIRPKQIPKGDERPLDALLQRGIEYIEIRSLDIDPYSPVGVCRSNLAFTQLILLDSLLKVSPSISEEENFSLKENLNSVIWEGRNPELKINVNGSKRNFQEAGAEYSESLRHYAKILDLHTGRRTYQEAIDFQIKKWKNPDKTPSGKLLSEILKRNIEFREKGIELAQENKRMFSYLEYSPGTLMKMEKETIRSFQEKEELEKQEIQTQYPTVKLCNH.

It belongs to the glutamate--cysteine ligase type 1 family. Type 1 subfamily.

It carries out the reaction L-cysteine + L-glutamate + ATP = gamma-L-glutamyl-L-cysteine + ADP + phosphate + H(+). Its pathway is sulfur metabolism; glutathione biosynthesis; glutathione from L-cysteine and L-glutamate: step 1/2. The chain is Glutamate--cysteine ligase from Leptospira interrogans serogroup Icterohaemorrhagiae serovar copenhageni (strain Fiocruz L1-130).